The primary structure comprises 254 residues: MAAAAATAATKGNGGGSGRVGAGDSSGARKKKGPGPVATAYLVIYNVVMTAGWLVIAVGLVRAYLAKGSYHSLYYSIERPLKFFQTGALLEILHCAIGIVPSSVVLTSFQVMSRVFLIWAVTHSVKEVQSEDSVLLFVIAWTITEIIRYSFYTFSLLNHLPYIIKWARYTLFIVLYPMGVTGELLTIYAALPFVRQAGLYSISLPNKYNFSFDYHAFLILIMISYIPLFPQLYFHMIHQRRKVLSHTEEHKKFE.

Over residues 1 to 10 the composition is skewed to low complexity; the sequence is MAAAAATAAT. The disordered stretch occupies residues 1-34; sequence MAAAAATAATKGNGGGSGRVGAGDSSGARKKKGP. Alanine 2 carries the post-translational modification N-acetylalanine. Residues 2 to 41 lie on the Cytoplasmic side of the membrane; sequence AAAAATAATKGNGGGSGRVGAGDSSGARKKKGPGPVATAY. Positions 12 to 21 are enriched in gly residues; sequence GNGGGSGRVG. Residues 42–60 form a helical membrane-spanning segment; sequence LVIYNVVMTAGWLVIAVGL. Over 61–79 the chain is Lumenal; the sequence is VRAYLAKGSYHSLYYSIER. Residues 80–97 traverse the membrane as a helical segment; it reads PLKFFQTGALLEILHCAI. Residues 98–107 are Cytoplasmic-facing; the sequence is GIVPSSVVLT. The helical transmembrane segment at 108–125 threads the bilayer; the sequence is SFQVMSRVFLIWAVTHSV. Topologically, residues 126 to 130 are lumenal; the sequence is KEVQS. A helical membrane pass occupies residues 131–146; it reads EDSVLLFVIAWTITEI. Residues 147–169 are Cytoplasmic-facing; that stretch reads IRYSFYTFSLLNHLPYIIKWARY. The helical transmembrane segment at 170–187 threads the bilayer; that stretch reads TLFIVLYPMGVTGELLTI. Catalysis depends on residues tyrosine 176 and glutamate 183. Topologically, residues 188 to 217 are lumenal; sequence YAALPFVRQAGLYSISLPNKYNFSFDYHAF. The interval 198–214 is may be involved in interaction with TECR; it reads GLYSISLPNKYNFSFDY. A glycan (N-linked (GlcNAc...) asparagine) is linked at asparagine 209. The chain crosses the membrane as a helical span at residues 218–235; the sequence is LILIMISYIPLFPQLYFH. Over 236–254 the chain is Cytoplasmic; sequence MIHQRRKVLSHTEEHKKFE.

This sequence belongs to the very long-chain fatty acids dehydratase HACD family. In terms of assembly, may interact with enzymes of the ELO family (including ELOVL1); with those enzymes that mediate condensation, the first of the four steps of the reaction cycle responsible for fatty acids elongation, may be part of a larger fatty acids elongase complex. Interacts with BCAP31. Interacts with TECR.

The protein localises to the endoplasmic reticulum membrane. It catalyses the reaction a very-long-chain (3R)-3-hydroxyacyl-CoA = a very-long-chain (2E)-enoyl-CoA + H2O. The enzyme catalyses (3R)-hydroxyhexadecanoyl-CoA = (2E)-hexadecenoyl-CoA + H2O. The catalysed reaction is (3R)-hydroxyoctadecanoyl-CoA = (2E)-octadecenoyl-CoA + H2O. It carries out the reaction (3R)-hydroxyeicosanoyl-CoA = (2E)-eicosenoyl-CoA + H2O. It catalyses the reaction (3R)-hydroxydocosanoyl-CoA = (2E)-docosenoyl-CoA + H2O. The enzyme catalyses (3R)-hydroxytetracosanoyl-CoA = (2E)-tetracosenoyl-CoA + H2O. The catalysed reaction is (3R)-hydroxyhexacosanoyl-CoA = (2E)-hexacosenoyl-CoA + H2O. It functions in the pathway lipid metabolism; fatty acid biosynthesis. Catalyzes the third of the very long-chain fatty acids (VLCFA) elongation four-step cycle (condensation, reduction, dehydration, and reduction). This endoplasmic reticulum-elongation process is characterized by the addition of two carbons to the lipid chain through each cycle. This enzyme catalyzes the dehydration of the 3-hydroxyacyl-CoA intermediate into trans-2,3-enoyl-CoA, within each cycle of elongation. Therefore, it participates in the production of various VLCFAs involved in multiple biological processes as precursors of membrane lipids and lipid mediators. The polypeptide is Very-long-chain (3R)-3-hydroxyacyl-CoA dehydratase 2 (Mus musculus (Mouse)).